The following is a 281-amino-acid chain: Very long chain fatty acid elongase 7 (281 aa).

The residue at position 2 (alanine 2) is an N-acetylalanine. Topologically, residues 2–27 are lumenal; that stretch reads AFSDLTSRTVRLYDNWIKDADPRVED. Residues 28 to 48 form a helical membrane-spanning segment; the sequence is WLLMSSPLPQTIILGFYVYFV. Over 49 to 66 the chain is Cytoplasmic; the sequence is TSLGPKLMENRKPFELKK. A helical transmembrane segment spans residues 67-87; sequence VMITYNFSIVLFSVYMFYEFI. Over 88–115 the chain is Lumenal; the sequence is MSGWGTGYSFRCDIVDYSQSPTALRMVR. Cysteine 99 and cysteine 231 are joined by a disulfide. Residues 116-136 traverse the membrane as a helical segment; sequence TCWLYYFSKFIELLDTIFFIL. 3-oxoeicosanoyl-CoA-binding residues include lysine 124, arginine 137, lysine 139, glutamine 142, and histidine 147. The Cytoplasmic segment spans residues 137–142; that stretch reads RKKNSQ. Residues 143–162 form a helical membrane-spanning segment; the sequence is VTFLHVFHHTIMPWTWWFGV. Positions 147–151 match the HxxHH motif motif; sequence HVFHH. Histidine 150 serves as the catalytic Nucleophile. At 163 to 171 the chain is on the lumenal side; sequence KFAAGGLGT. A helical membrane pass occupies residues 172 to 194; the sequence is FHAFLNTAVHVVMYSYYGLCALG. 3-oxoeicosanoyl-CoA is bound by residues tyrosine 187, lysine 204, threonine 208, and glutamine 211. The Cytoplasmic portion of the chain corresponds to 195 to 206; sequence PDYQKYLWWKKY. Residues 207-227 traverse the membrane as a helical segment; that stretch reads LTSLQLIQFVLITIHISQFFF. The Lumenal segment spans residues 228-236; sequence MEDCKYQFP. A helical transmembrane segment spans residues 237–257; it reads VFQYIIMSYGCIFLLLFLHFW. Topologically, residues 258–281 are cytoplasmic; it reads YRAYTKGQRLPKTVKHGICKNKDH. Arginine 266 lines the 3-oxoeicosanoyl-CoA pocket. The Di-lysine motif motif lies at 277–281; that stretch reads KNKDH.

It belongs to the ELO family. ELOVL7 subfamily. As to quaternary structure, homodimer. Interacts with TECR.

It localises to the endoplasmic reticulum membrane. The enzyme catalyses a very-long-chain acyl-CoA + malonyl-CoA + H(+) = a very-long-chain 3-oxoacyl-CoA + CO2 + CoA. It carries out the reaction eicosanoyl-CoA + malonyl-CoA + H(+) = 3-oxodocosanoyl-CoA + CO2 + CoA. The catalysed reaction is (5Z,8Z,11Z,14Z)-eicosatetraenoyl-CoA + malonyl-CoA + H(+) = (7Z,10Z,13Z,16Z)-3-oxodocosatetraenoyl-CoA + CO2 + CoA. It catalyses the reaction (6Z,9Z,12Z)-octadecatrienoyl-CoA + malonyl-CoA + H(+) = (8Z,11Z,14Z)-3-oxoeicosatrienoyl-CoA + CO2 + CoA. The enzyme catalyses (9Z,12Z)-octadecadienoyl-CoA + malonyl-CoA + H(+) = (11Z,14Z)-3-oxoicosa-11,14-dienoyl-CoA + CO2 + CoA. It carries out the reaction (9Z)-octadecenoyl-CoA + malonyl-CoA + H(+) = 3-oxo-(11Z)-eicosenoyl-CoA + CO2 + CoA. The catalysed reaction is octadecanoyl-CoA + malonyl-CoA + H(+) = 3-oxoeicosanoyl-CoA + CO2 + CoA. It catalyses the reaction hexadecanoyl-CoA + malonyl-CoA + H(+) = 3-oxooctadecanoyl-CoA + CO2 + CoA. The enzyme catalyses (9Z,12Z,15Z)-octadecatrienoyl-CoA + malonyl-CoA + H(+) = (11Z,14Z,17Z)-3-oxoeicosatrienoyl-CoA + CO2 + CoA. The protein operates within lipid metabolism; fatty acid biosynthesis. Functionally, catalyzes the first and rate-limiting reaction of the four reactions that constitute the long-chain fatty acids elongation cycle. This endoplasmic reticulum-bound enzymatic process allows the addition of 2 carbons to the chain of long- and very long-chain fatty acids (VLCFAs) per cycle. Condensing enzyme with higher activity toward C18 acyl-CoAs, especially C18:3(n-3) acyl-CoAs and C18:3(n-6)-CoAs. Also active toward C20:4-, C18:0-, C18:1-, C18:2- and C16:0-CoAs, and weakly toward C20:0-CoA. Little or no activity toward C22:0-, C24:0-, or C26:0-CoAs. May participate in the production of saturated and polyunsaturated VLCFAs of different chain lengths that are involved in multiple biological processes as precursors of membrane lipids and lipid mediators. The chain is Very long chain fatty acid elongase 7 from Bos taurus (Bovine).